The following is a 293-amino-acid chain: MAMNKSVGLFSSASLAVDYVDSLLPENPLQEPFKNAWVYMLDNYTKFQIATWGSLIVHETIYFLFSLPGFLFQFIPFMRKYKIQKDKPETFEGQWKCLKGILFNHFFIQLPLICGTYYFTEFFNIPYDWERMPRWYFTLARCLGCAVIEDTWHYFLHRLLHHKRIYKYIHKVHHEFQAPFGIEAEYAHPLETLILGTGFFIGIVLLCDHVILLWAWVTMRLLETIDVHSGYDIPLNPLNYIPFYTGARHHDFHHMNFIGNYASTFTWWDRIFGTDVQYHAYTEKMKKLGKKSE.

The next 2 membrane-spanning stretches (helical) occupy residues 55–75 (LIVH…FQFI) and 100–120 (GILF…YYFT). The region spanning 144–274 (GCAVIEDTWH…FTWWDRIFGT (131 aa)) is the Fatty acid hydroxylase domain. The short motif at 157–161 (HRLLH) is the Histidine box-1 element. The Histidine box-2 motif lies at 170-174 (HKVHH). Residues 199 to 219 (FFIGIVLLCDHVILLWAWVTM) traverse the membrane as a helical segment. Positions 249 to 255 (HHDFHHM) match the Histidine box-3 motif.

The protein belongs to the sterol desaturase family. Requires Fe cation as cofactor. Post-translationally, ubiquitinated by MARCHF6, leading to proteasomal degradation.

The protein resides in the endoplasmic reticulum membrane. It carries out the reaction 4,4-dimethyl-5alpha-cholest-7-en-3beta-ol + 6 Fe(II)-[cytochrome b5] + 3 O2 + 5 H(+) = 4alpha-carboxy-4beta-methyl-5alpha-cholest-7-ene-3beta-ol + 6 Fe(III)-[cytochrome b5] + 4 H2O. The enzyme catalyses 4,4-dimethyl-5alpha-cholesta-8,24-dien-3beta-ol + 6 Fe(II)-[cytochrome b5] + 3 O2 + 5 H(+) = 4beta-methylzymosterol-4alpha-carboxylate + 6 Fe(III)-[cytochrome b5] + 4 H2O. The catalysed reaction is 4alpha-methylzymosterol + 6 Fe(II)-[cytochrome b5] + 3 O2 + 5 H(+) = 4alpha-carboxyzymosterol + 6 Fe(III)-[cytochrome b5] + 4 H2O. It catalyses the reaction 4alpha-methyl-5alpha-cholest-7-en-3beta-ol + 6 Fe(II)-[cytochrome b5] + 3 O2 + 5 H(+) = 4alpha-carboxy-5alpha-cholest-7-en-3beta-ol + 6 Fe(III)-[cytochrome b5] + 4 H2O. It carries out the reaction 4,4-dimethyl-5alpha-cholest-8-en-3beta-ol + 6 Fe(II)-[cytochrome b5] + 3 O2 + 5 H(+) = 4alpha-carboxy-4beta-methyl-5alpha-cholest-8-en-3beta-ol + 6 Fe(III)-[cytochrome b5] + 4 H2O. The enzyme catalyses 4alpha-methyl-5alpha-cholest-8-en-3beta-ol + 6 Fe(II)-[cytochrome b5] + 3 O2 + 5 H(+) = 4alpha-carboxy-5alpha-cholest-8-ene-3beta-ol + 6 Fe(III)-[cytochrome b5] + 4 H2O. It functions in the pathway steroid biosynthesis; zymosterol biosynthesis; zymosterol from lanosterol: step 3/6. It participates in steroid biosynthesis; cholesterol biosynthesis. Catalyzes the three-step monooxygenation required for the demethylation of 4,4-dimethyl and 4alpha-methylsterols, which can be subsequently metabolized to cholesterol. This chain is Methylsterol monooxygenase 1 (Msmo1), found in Rattus norvegicus (Rat).